Consider the following 962-residue polypeptide: Glycine dehydrogenase (decarboxylating) (962 aa).

N6-(pyridoxal phosphate)lysine is present on Lys-709.

The protein belongs to the GcvP family. As to quaternary structure, the glycine cleavage system is composed of four proteins: P, T, L and H. It depends on pyridoxal 5'-phosphate as a cofactor.

It catalyses the reaction N(6)-[(R)-lipoyl]-L-lysyl-[glycine-cleavage complex H protein] + glycine + H(+) = N(6)-[(R)-S(8)-aminomethyldihydrolipoyl]-L-lysyl-[glycine-cleavage complex H protein] + CO2. The glycine cleavage system catalyzes the degradation of glycine. The P protein binds the alpha-amino group of glycine through its pyridoxal phosphate cofactor; CO(2) is released and the remaining methylamine moiety is then transferred to the lipoamide cofactor of the H protein. The protein is Glycine dehydrogenase (decarboxylating) of Shewanella sediminis (strain HAW-EB3).